The chain runs to 200 residues: Imidazole glycerol phosphate synthase subunit HisH (200 aa).

Positions 3 to 200 (DVALIDAGGA…LRNFLEMSFP (198 aa)) constitute a Glutamine amidotransferase type-1 domain. Cysteine 78 (nucleophile) is an active-site residue. Catalysis depends on residues histidine 179 and glutamate 181.

As to quaternary structure, heterodimer of HisH and HisF.

The protein resides in the cytoplasm. The enzyme catalyses 5-[(5-phospho-1-deoxy-D-ribulos-1-ylimino)methylamino]-1-(5-phospho-beta-D-ribosyl)imidazole-4-carboxamide + L-glutamine = D-erythro-1-(imidazol-4-yl)glycerol 3-phosphate + 5-amino-1-(5-phospho-beta-D-ribosyl)imidazole-4-carboxamide + L-glutamate + H(+). The catalysed reaction is L-glutamine + H2O = L-glutamate + NH4(+). It functions in the pathway amino-acid biosynthesis; L-histidine biosynthesis; L-histidine from 5-phospho-alpha-D-ribose 1-diphosphate: step 5/9. Its function is as follows. IGPS catalyzes the conversion of PRFAR and glutamine to IGP, AICAR and glutamate. The HisH subunit catalyzes the hydrolysis of glutamine to glutamate and ammonia as part of the synthesis of IGP and AICAR. The resulting ammonia molecule is channeled to the active site of HisF. The chain is Imidazole glycerol phosphate synthase subunit HisH from Xanthomonas euvesicatoria pv. vesicatoria (strain 85-10) (Xanthomonas campestris pv. vesicatoria).